Consider the following 389-residue polypeptide: Carbamoyl phosphate synthase small chain (389 aa).

Positions 1–197 are CPSase; the sequence is MMSSPAKAAK…AAKDASIGDD (197 aa). Positions 51, 249, and 251 each coordinate L-glutamine. In terms of domain architecture, Glutamine amidotransferase type-1 spans 201-387; sequence HVVCMDFGMK…QEQLNEKCGV (187 aa). Residue C276 is the Nucleophile of the active site. 5 residues coordinate L-glutamine: L277, Q280, N318, G320, and F321. Residues H360 and E362 contribute to the active site.

It belongs to the CarA family. As to quaternary structure, composed of two chains; the small (or glutamine) chain promotes the hydrolysis of glutamine to ammonia, which is used by the large (or ammonia) chain to synthesize carbamoyl phosphate. Tetramer of heterodimers (alpha,beta)4.

It catalyses the reaction hydrogencarbonate + L-glutamine + 2 ATP + H2O = carbamoyl phosphate + L-glutamate + 2 ADP + phosphate + 2 H(+). It carries out the reaction L-glutamine + H2O = L-glutamate + NH4(+). The protein operates within amino-acid biosynthesis; L-arginine biosynthesis; carbamoyl phosphate from bicarbonate: step 1/1. It participates in pyrimidine metabolism; UMP biosynthesis via de novo pathway; (S)-dihydroorotate from bicarbonate: step 1/3. Functionally, small subunit of the glutamine-dependent carbamoyl phosphate synthetase (CPSase). CPSase catalyzes the formation of carbamoyl phosphate from the ammonia moiety of glutamine, carbonate, and phosphate donated by ATP, constituting the first step of 2 biosynthetic pathways, one leading to arginine and/or urea and the other to pyrimidine nucleotides. The small subunit (glutamine amidotransferase) binds and cleaves glutamine to supply the large subunit with the substrate ammonia. This Rhodopirellula baltica (strain DSM 10527 / NCIMB 13988 / SH1) protein is Carbamoyl phosphate synthase small chain.